The following is a 68-amino-acid chain: Beta-defensin 1 (68 aa).

A signal peptide spans 1–21 (MRTSYLLLFTLCLLLSEMASG). Positions 22 to 32 (GNFLTGLGHRS) are excised as a propeptide. Intrachain disulfides connect cysteine 37-cysteine 66, cysteine 44-cysteine 59, and cysteine 49-cysteine 67.

The protein belongs to the beta-defensin family. Monomer. Homodimer.

It localises to the secreted. Its subcellular location is the membrane. Its function is as follows. Has bactericidal activity. May act as a ligand for C-C chemokine receptor CCR6. Positively regulates the sperm motility and bactericidal activity in a CCR6-dependent manner. Binds to CCR6 and triggers Ca2+ mobilization in the sperm which is important for its motility. The protein is Beta-defensin 1 (DEFB1) of Pan troglodytes (Chimpanzee).